The following is a 244-amino-acid chain: Protein crossbronx (244 aa).

Positions 20–176 (QQEYKILAEY…VQKNIKESKD (157 aa)) constitute a UBC core domain.

It belongs to the ubiquitin-conjugating enzyme family. FTS subfamily.

In Drosophila yakuba (Fruit fly), this protein is Protein crossbronx (cbx).